The chain runs to 1026 residues: DNA polymerase catalytic subunit (1026 aa).

The stretch at 664-695 forms a coiled coil; it reads LKTWLAKRKSIKKELEQCQDAKMKTILDKQQL.

Belongs to the DNA polymerase type-B family.

The protein resides in the host nucleus. The catalysed reaction is DNA(n) + a 2'-deoxyribonucleoside 5'-triphosphate = DNA(n+1) + diphosphate. Functionally, replicates viral genomic DNA. In Alcelaphine herpesvirus 1 (strain C500) (AlHV-1), this protein is DNA polymerase catalytic subunit (9).